We begin with the raw amino-acid sequence, 421 residues long: Probable N-acetylgalactosaminyltransferase 8 (421 aa).

Over 1–3 (MRR) the chain is Cytoplasmic. A helical; Signal-anchor for type II membrane protein transmembrane segment spans residues 4-24 (HVVLSIFVFAGIVFAAEEAEK). Residues 25–421 (LPKCEHVDPY…ELEPKVHDEL (397 aa)) are Lumenal-facing. 2 N-linked (GlcNAc...) asparagine glycosylation sites follow: asparagine 52 and asparagine 58. Disulfide bonds link cysteine 98–cysteine 331 and cysteine 322–cysteine 399. Positions 106 to 219 (SYSTSVVVIH…ERWLEPLLQP (114 aa)) are catalytic subdomain A. Positions 147 and 180 each coordinate substrate. Aspartate 203 contributes to the Mn(2+) binding site. Residue serine 204 coordinates substrate. Histidine 205 is a Mn(2+) binding site. The interval 277 to 339 (PFNSPAMPGG…PCSRVGHVFR (63 aa)) is catalytic subdomain B. Tryptophan 308 contributes to the substrate binding site. Histidine 336 contacts Mn(2+). Substrate is bound by residues arginine 339 and tyrosine 344. The Prevents secretion from ER signature appears at 418–421 (HDEL).

This sequence belongs to the glycosyltransferase 2 family. GalNAc-T subfamily. Mn(2+) is required as a cofactor.

It is found in the golgi apparatus membrane. It functions in the pathway protein modification; protein glycosylation. Functionally, potential glycopeptide transferase involved in O-linked oligosaccharide biosynthesis. In contrast to other members of the family, it does not act as a peptide transferase that transfers GalNAc onto serine or threonine residue on peptides that have been tested. Some peptide transferase activity is however not excluded, considering that its appropriate peptide substrate may remain unidentified. This chain is Probable N-acetylgalactosaminyltransferase 8 (gly-8), found in Caenorhabditis elegans.